We begin with the raw amino-acid sequence, 117 residues long: MANHFRTDRVGMEIKREVNEILQKKVRDPRVQGVTITDVQMVGDLSTAKVYYTIMSNLASDNQKAQTGLEKATGTIKRELGRKLTLYKIPDLVFEKDQSIEYGNKIDQMLRALDQKD.

Belongs to the RbfA family. In terms of assembly, monomer. Binds 30S ribosomal subunits, but not 50S ribosomal subunits or 70S ribosomes.

Its subcellular location is the cytoplasm. In terms of biological role, one of several proteins that assist in the late maturation steps of the functional core of the 30S ribosomal subunit. Associates with free 30S ribosomal subunits (but not with 30S subunits that are part of 70S ribosomes or polysomes). Required for efficient processing of 16S rRNA. May interact with the 5'-terminal helix region of 16S rRNA. The protein is Ribosome-binding factor A of Streptococcus suis (strain 98HAH33).